A 95-amino-acid chain; its full sequence is Small ribosomal subunit protein uS19 (95 aa).

Belongs to the universal ribosomal protein uS19 family.

Its function is as follows. Protein S19 forms a complex with S13 that binds strongly to the 16S ribosomal RNA. This is Small ribosomal subunit protein uS19 from Clostridium kluyveri (strain NBRC 12016).